A 384-amino-acid polypeptide reads, in one-letter code: Tetraacyldisaccharide 4'-kinase (384 aa).

72–79 (TAGGTGKT) is an ATP binding site.

This sequence belongs to the LpxK family.

It carries out the reaction a lipid A disaccharide + ATP = a lipid IVA + ADP + H(+). Its pathway is glycolipid biosynthesis; lipid IV(A) biosynthesis; lipid IV(A) from (3R)-3-hydroxytetradecanoyl-[acyl-carrier-protein] and UDP-N-acetyl-alpha-D-glucosamine: step 6/6. In terms of biological role, transfers the gamma-phosphate of ATP to the 4'-position of a tetraacyldisaccharide 1-phosphate intermediate (termed DS-1-P) to form tetraacyldisaccharide 1,4'-bis-phosphate (lipid IVA). This chain is Tetraacyldisaccharide 4'-kinase, found in Halothermothrix orenii (strain H 168 / OCM 544 / DSM 9562).